A 231-amino-acid chain; its full sequence is Orotidine 5'-phosphate decarboxylase (231 aa).

Residues Asp11, Lys33, 60–69, Thr120, Arg181, Gln190, Gly210, and Arg211 contribute to the substrate site; that span reads DLKFHDIPNT. Lys62 acts as the Proton donor in catalysis.

The protein belongs to the OMP decarboxylase family. Type 1 subfamily. In terms of assembly, homodimer.

It catalyses the reaction orotidine 5'-phosphate + H(+) = UMP + CO2. Its pathway is pyrimidine metabolism; UMP biosynthesis via de novo pathway; UMP from orotate: step 2/2. Functionally, catalyzes the decarboxylation of orotidine 5'-monophosphate (OMP) to uridine 5'-monophosphate (UMP). The polypeptide is Orotidine 5'-phosphate decarboxylase (Vibrio cholerae serotype O1 (strain ATCC 39541 / Classical Ogawa 395 / O395)).